Consider the following 151-residue polypeptide: Ribosome maturation factor RimP (151 aa).

It belongs to the RimP family.

It localises to the cytoplasm. In terms of biological role, required for maturation of 30S ribosomal subunits. The protein is Ribosome maturation factor RimP of Shewanella sp. (strain ANA-3).